Here is a 336-residue protein sequence, read N- to C-terminus: NmrA-like family domain-containing oxidoreductase malD (336 aa).

NADP(+) contacts are provided by residues 12–17, 40–44, 61–62, 82–84, Lys140, and 163–166; these read GGTGNQ, RDPTS, DG, TNS, and FMEA.

It belongs to the NmrA-type oxidoreductase family.

Functionally, nmrA-like family domain-containing oxidoreductase; part of the gene cluster that mediates the biosynthesis of malbrancheamide, a dichlorinated fungal indole alkaloid that belongs to a family of natural products containing a characteristic bicyclo[2.2.2]diazaoctane core. The first step of malbrancheamide biosynthesis involves coupling of L-proline and L-tryptophan by malG, a bimodular NRPS, to produce L-Pro-L-Trp aldehyde through reductive offloading. This compound undergoes spontaneous cyclization and dehydration to give a dienamine which is reverse prenylated at C-2 by malE. The other prenyltransferase present in the cluster, malB, displays modest activity, suggesting that may be a redundant gene in the pathway. Subsequently, a [4+2] Diels-Alder cyclo-addition catalyzed by the bifunctional enzyme malC forms the characteristic bicyclo[2.2.2]diazaoctane ring of premalbrancheamid. Finally, the flavin-dependent halogenase malA catalyzes the iterative dichlorination of the indole ring of premalbrancheamide to yield C-9 monochlorinated malbrancheamide B, C-8 monochlorinated isomalbrancheamide B, and dichlorinated malbrancheamide. MalA is also able to brominate premalbrancheamide at C-9 to yield malbrancheamide C, and, to a lesser extend, at C-8 to yield isomalbrancheamide C. Finally, malA can brominate C-9 monochlorinated malbrancheamide B at C-8 to yield malbrancheamide D, or C-8 monochlorinated isomalbrancheamide B at C-9 to produce isomalbrancheamide D. The polypeptide is NmrA-like family domain-containing oxidoreductase malD (Malbranchea aurantiaca).